The chain runs to 86 residues: Dolichyl-diphosphooligosaccharide--protein glycosyltransferase subunit OST5 (86 aa).

Residues 2-27 (TYEQLYKEFHSSKSFQPFIHLDTQPK) lie on the Lumenal side of the membrane. The helical transmembrane segment at 28–48 (FAICGLIVTLAVLSSALFAVG) threads the bilayer. Residues 49 to 56 (SKSSYIKK) lie on the Cytoplasmic side of the membrane. The chain crosses the membrane as a helical span at residues 57-77 (LFFYTILSVIGSLFAGLTTVF). Topologically, residues 78-86 (ASNSFGVYV) are lumenal.

This sequence belongs to the OST5 family. Component of the oligosaccharyltransferase (OST) complex, which appears to exist in two assemblies comprising OST1, OST2, OST4, OST5, STT3, SWP1, WPB1, and either OST3 or OST6. OST assembly occurs through the formation of 3 subcomplexes. Subcomplex 1 contains OST1 and OST5, subcomplex 2 contains STT3, OST3, and OST4, and subcomplex 3 contains OST2, WBP1, and SWP1.

The protein resides in the endoplasmic reticulum membrane. It participates in protein modification; protein glycosylation. In terms of biological role, subunit of the oligosaccharyl transferase (OST) complex that catalyzes the initial transfer of a defined glycan (Glc(3)Man(9)GlcNAc(2) in eukaryotes) from the lipid carrier dolichol-pyrophosphate to an asparagine residue within an Asn-X-Ser/Thr consensus motif in nascent polypeptide chains, the first step in protein N-glycosylation. N-glycosylation occurs cotranslationally and the complex associates with the Sec61 complex at the channel-forming translocon complex that mediates protein translocation across the endoplasmic reticulum (ER). All subunits are required for a maximal enzyme activity. In Saccharomyces cerevisiae (strain ATCC 204508 / S288c) (Baker's yeast), this protein is Dolichyl-diphosphooligosaccharide--protein glycosyltransferase subunit OST5 (OST5).